Consider the following 649-residue polypeptide: Arylsulfatase (649 aa).

The signal sequence occupies residues 1–22; the sequence is MLQRLVVALCLLGFAALTAAAA. D34 and D35 together coordinate Ca(2+). N41 carries N-linked (GlcNAc...) asparagine glycosylation. C72 lines the Ca(2+) pocket. C72 serves as the catalytic Nucleophile. At C72 the chain carries 3-oxoalanine (Cys). N-linked (GlcNAc...) asparagine glycosylation is found at N89, N224, and N279. Ca(2+) contacts are provided by D324 and N325. Residues N445, N489, and N531 are each glycosylated (N-linked (GlcNAc...) asparagine).

Belongs to the sulfatase family. Ca(2+) serves as cofactor. In terms of processing, the conversion to 3-oxoalanine (also known as C-formylglycine, FGly), of a serine or cysteine residue in prokaryotes and of a cysteine residue in eukaryotes, is critical for catalytic activity.

It localises to the periplasm. It carries out the reaction an aryl sulfate + H2O = a phenol + sulfate + H(+). Its activity is regulated as follows. Inhibited by Na(3)BO(3) and KCN. No inhibition by sodium dodecyl sulfate, even at high concentration. In terms of biological role, is commonly produced by soil microorganisms and plays an important role in the mineralization of sulfates. This is Arylsulfatase from Volvox carteri (Green alga).